The chain runs to 243 residues: Pyrimidodiazepine synthase (243 aa).

Positions 20–102 (GILRLYSMRF…YLDEQYPLRP (83 aa)) constitute a GST N-terminal domain. C30 functions as the Nucleophile in the catalytic mechanism. Residues K57, V70, and 86-87 (ES) each bind glutathione. A GST C-terminal domain is found at 107 to 230 (DPLKKVQDKL…VQAEFLRTRS (124 aa)).

Belongs to the GST superfamily. Omega family. As to quaternary structure, homodimer.

The catalysed reaction is 2-amino-6-acetyl-3,7,8,9-tetrahydro-3H-pyrimido[4,5-b][1,4]diazepin-4-one + glutathione disulfide + H2O = 6-pyruvoyl-5,6,7,8-tetrahydropterin + 2 glutathione. Mediates the conversion of 2-amino-4-oxo-6-pyruvoyl-5,6,7,8-tetrahydropteridine (6-PTP; also named 6-pyruvoyltetrahydropterin) to 2-amino-6-acetyl-3,7,8,9-tetrahydro-3H-pyrimido(4,5-b)[1,4]diazepin-4-one (pyrimidodiazepine or PDA), a key intermediate in red eye pigment drosopterin biosynthesis. The sequence is that of Pyrimidodiazepine synthase from Drosophila melanogaster (Fruit fly).